A 749-amino-acid polypeptide reads, in one-letter code: Transcription factor RFX3 (749 aa).

The segment at residues 183 to 258 (HLQWLLDNYE…YHYYGIRVKP (76 aa)) is a DNA-binding region (RFX-type winged-helix). A disordered region spans residues 663–699 (VSPGNLDKDEGSEVESEMDEELDDSSEPQAKREKTEL). Residues 674–688 (SEVESEMDEELDDSS) show a composition bias toward acidic residues.

This sequence belongs to the RFX family. In terms of assembly, heterodimer; heterodimerizes with RFX1 and RFX2, and RFX6.

Its subcellular location is the nucleus. Its function is as follows. Transcription factor required for ciliogenesis and islet cell differentiation during endocrine pancreas development. Essential for the differentiation of nodal monocilia and left-right asymmetry specification during embryogenesis. Required for the biogenesis of motile cilia by governing growth and beating efficiency of motile cells. Also required for ciliated ependymal cell differentiation. Regulates the expression of genes involved in ciliary assembly (DYNC2LI1, FOXJ1 and BBS4) and genes involved in ciliary motility (DNAH11, DNAH9 and DNAH5). Together with RFX6, participates in the differentiation of 4 of the 5 islet cell types during endocrine pancreas development, with the exception of pancreatic PP (polypeptide-producing) cells. Regulates transcription by forming a heterodimer with another RFX protein and binding to the X-box in the promoter of target genes. Represses transcription of MAP1A in non-neuronal cells but not in neuronal cells. This is Transcription factor RFX3 (RFX3) from Macaca fascicularis (Crab-eating macaque).